The sequence spans 152 residues: uncharacterized protein (152 aa).

A glycan (N-linked (GlcNAc...) asparagine; by host) is linked at N2. A run of 3 helical transmembrane segments spans residues 5 to 25 (MILL…MNLW), 36 to 56 (LNDF…CYIL), and 68 to 88 (LIIT…QAFI). Residue N113 is glycosylated (N-linked (GlcNAc...) asparagine; by host).

It is found in the membrane. This is an uncharacterized protein from Acanthamoeba polyphaga mimivirus (APMV).